We begin with the raw amino-acid sequence, 235 residues long: Probable GTP-binding protein EngB (235 aa).

Residues Gln-23–Leu-219 enclose the EngB-type G domain. GTP-binding positions include Gly-31–Ser-38, Gly-58–His-62, Asp-92–Gly-95, Thr-159–Asp-162, and Phe-193–Ala-200. Mg(2+) contacts are provided by Ser-38 and Thr-60.

Belongs to the TRAFAC class TrmE-Era-EngA-EngB-Septin-like GTPase superfamily. EngB GTPase family. Requires Mg(2+) as cofactor.

Necessary for normal cell division and for the maintenance of normal septation. In Janthinobacterium sp. (strain Marseille) (Minibacterium massiliensis), this protein is Probable GTP-binding protein EngB.